Consider the following 718-residue polypeptide: Ribosomal RNA large subunit methyltransferase K/L (718 aa).

The THUMP domain occupies T43 to L154.

This sequence belongs to the methyltransferase superfamily. RlmKL family.

It is found in the cytoplasm. It carries out the reaction guanosine(2445) in 23S rRNA + S-adenosyl-L-methionine = N(2)-methylguanosine(2445) in 23S rRNA + S-adenosyl-L-homocysteine + H(+). It catalyses the reaction guanosine(2069) in 23S rRNA + S-adenosyl-L-methionine = N(2)-methylguanosine(2069) in 23S rRNA + S-adenosyl-L-homocysteine + H(+). Its function is as follows. Specifically methylates the guanine in position 2445 (m2G2445) and the guanine in position 2069 (m7G2069) of 23S rRNA. In Histophilus somni (strain 129Pt) (Haemophilus somnus), this protein is Ribosomal RNA large subunit methyltransferase K/L.